A 488-amino-acid chain; its full sequence is L-amino oxidase (488 aa).

Residues 60–61 (MS), 80–81 (EA), Arg88, and 104–107 (GPMR) each bind FAD. Residues Arg107 and Tyr388 each contribute to the substrate site. A disulfide bridge connects residues Cys347 and Cys428. Residues Glu474 and 481–486 (GWIDST) each bind FAD. 481 to 482 (GW) serves as a coordination point for substrate.

The protein belongs to the flavin monoamine oxidase family. FIG1 subfamily. As to quaternary structure, monomer. This is in contrast with most of its orthologs, that are non-covalently linked homodimers. FAD serves as cofactor. N-glycosylated. Expressed by the venom gland.

It localises to the secreted. It catalyses the reaction an L-alpha-amino acid + O2 + H2O = a 2-oxocarboxylate + H2O2 + NH4(+). The enzyme catalyses L-leucine + O2 + H2O = 4-methyl-2-oxopentanoate + H2O2 + NH4(+). Functionally, catalyzes an oxidative deamination of predominantly hydrophobic and aromatic L-amino acids, thus producing hydrogen peroxide that may contribute to the diverse toxic effects of this enzyme. Shows activity on L-Leu. Exhibits diverse biological activities, such as hemorrhage, hemolysis, edema, antibacterial and antiparasitic activities, as well as regulation of platelet aggregation. When tested on SW480 and SW620 human colon cancer cells, shows inhibition of cell proliferation, and induction of apoptosis, which is probably a consequence of the increased caspase-3 activity and the decreased Bcl-2 expression. The chain is L-amino oxidase from Trimeresurus purpureomaculatus (Mangrove pit viper).